The chain runs to 480 residues: tRNA-2-methylthio-N(6)-dimethylallyladenosine synthase (480 aa).

The region spanning 32 to 149 (RKLYIRTFGC…LPELIRRRRA (118 aa)) is the MTTase N-terminal domain. Positions 41, 78, 112, 186, 190, and 193 each coordinate [4Fe-4S] cluster. The region spanning 172 to 405 (RIEGATAFVS…QALINAQAAA (234 aa)) is the Radical SAM core domain. The 64-residue stretch at 408 to 471 (QAMVGTRQRL…PNSLRARVAD (64 aa)) folds into the TRAM domain.

The protein belongs to the methylthiotransferase family. MiaB subfamily. In terms of assembly, monomer. It depends on [4Fe-4S] cluster as a cofactor.

The protein resides in the cytoplasm. The enzyme catalyses N(6)-dimethylallyladenosine(37) in tRNA + (sulfur carrier)-SH + AH2 + 2 S-adenosyl-L-methionine = 2-methylsulfanyl-N(6)-dimethylallyladenosine(37) in tRNA + (sulfur carrier)-H + 5'-deoxyadenosine + L-methionine + A + S-adenosyl-L-homocysteine + 2 H(+). In terms of biological role, catalyzes the methylthiolation of N6-(dimethylallyl)adenosine (i(6)A), leading to the formation of 2-methylthio-N6-(dimethylallyl)adenosine (ms(2)i(6)A) at position 37 in tRNAs that read codons beginning with uridine. This Bordetella petrii (strain ATCC BAA-461 / DSM 12804 / CCUG 43448) protein is tRNA-2-methylthio-N(6)-dimethylallyladenosine synthase.